A 256-amino-acid polypeptide reads, in one-letter code: uncharacterized protein (256 aa).

The segment covering 201–214 (ACKEGVDSSCKEEG) has biased composition (basic and acidic residues). A disordered region spans residues 201 to 231 (ACKEGVDSSCKEEGGGCEEEGSGSEEDSDDS). Residues 215–231 (GGCEEEGSGSEEDSDDS) show a composition bias toward acidic residues.

It localises to the mitochondrion. This is an uncharacterized protein from Zea mays (Maize).